We begin with the raw amino-acid sequence, 140 residues long: Pro-variola growth factor (140 aa).

Residues 1–18 (MSMKYLMLLFAAMIIRSF) form the signal peptide. At 19–100 (ANSGNAIETT…SEKPNTTTSY (82 aa)) the chain is on the extracellular side. The N-linked (GlcNAc...) asparagine; by host glycan is linked to Asn-34. Residues 41 to 81 (AIRLCGPEGNGYCFHGICIHARDIDGMYCRCSHGYTGIRCQ) form the EGF-like domain. Intrachain disulfides connect Cys-45–Cys-58, Cys-53–Cys-69, and Cys-71–Cys-80. A glycan (N-linked (GlcNAc...) asparagine; by host) is linked at Asn-95. The helical transmembrane segment at 101–121 (IPSPGIVLVLLVSIIMCCLLF) threads the bilayer. Residues 122–140 (VYRFTRRTNKLPLQDMVVP) lie on the Cytoplasmic side of the membrane.

The protein belongs to the orthopoxvirus OPG019 family. In terms of assembly, variola growth factor interacts with host EGFR and promotes EGFR dimerization.

It is found in the host membrane. It localises to the secreted. Its function is as follows. Stimulates cellular proliferation (hyperplasia)and mobility around infected cells to promote rapid and efficient spread of infection. This effect is beneficial for virus replication in vivo, because poxviruses replicate possibly better in proliferating cells than in quiescent cells. Acts by binding host EGFR, inducing its dimerization, autophosphorylation and leading to activation of several cellular pathways regulating cell proliferation or cell survival. The activation by host EGFR of mitogen activated protein kinases (MAPK) and extracellular-signal regulated kinases (ERK) are essential for the positive effect of vaccinia growth factor on poxvirus virulence in vivo. This Variola virus protein is Pro-variola growth factor (OPG019).